The primary structure comprises 501 residues: Ribulose bisphosphate carboxylase large chain (501 aa).

Substrate is bound by residues asparagine 141 and threonine 191. Lysine 193 functions as the Proton acceptor in the catalytic mechanism. Residue lysine 195 participates in substrate binding. Mg(2+) contacts are provided by lysine 219, aspartate 221, and glutamate 222. Lysine 219 carries the post-translational modification N6-carboxylysine. Histidine 311 functions as the Proton acceptor in the catalytic mechanism. Residues arginine 312, histidine 344, and serine 396 each contribute to the substrate site.

It belongs to the RuBisCO large chain family. Type I subfamily. As to quaternary structure, heterohexadecamer of 8 large chains and 8 small chains. Requires Mg(2+) as cofactor.

It carries out the reaction 2 (2R)-3-phosphoglycerate + 2 H(+) = D-ribulose 1,5-bisphosphate + CO2 + H2O. The catalysed reaction is D-ribulose 1,5-bisphosphate + O2 = 2-phosphoglycolate + (2R)-3-phosphoglycerate + 2 H(+). Functionally, ruBisCO catalyzes two reactions: the carboxylation of D-ribulose 1,5-bisphosphate, the primary event in carbon dioxide fixation, as well as the oxidative fragmentation of the pentose substrate. Both reactions occur simultaneously and in competition at the same active site. In Paraburkholderia phymatum (strain DSM 17167 / CIP 108236 / LMG 21445 / STM815) (Burkholderia phymatum), this protein is Ribulose bisphosphate carboxylase large chain.